The following is a 1051-amino-acid chain: Putative helicase/primase complex protein (1051 aa).

The protein belongs to the asfivirus F1055L family.

May be involved in DNA replication. This is Putative helicase/primase complex protein from Ornithodoros (relapsing fever ticks).